The following is a 188-amino-acid chain: CASP-like protein 4B3 (188 aa).

The disordered stretch occupies residues 1-21 (MSFSPASSEPHDAPAAAGSSV). Topologically, residues 1 to 42 (MSFSPASSEPHDAPAAAGSSVPASRSIAERWKMEAAPIRARL) are cytoplasmic. A helical transmembrane segment spans residues 43–63 (LLRAFAWLFSLLALVVMATDV). Residues 64–76 (HGRGGAQDFSTYP) are Extracellular-facing. Residues 77–97 (EYNYCLGMSIIALLYATAQLV) form a helical membrane-spanning segment. The Cytoplasmic segment spans residues 98 to 114 (RDAHRLSSGRDLVAGRK). A helical transmembrane segment spans residues 115 to 135 (AAAVVDFAGDQVVAYSLISGL). The Extracellular segment spans residues 136–156 (SAAAPVTDYMRQATDNLFNDS). Residue asparagine 154 is glycosylated (N-linked (GlcNAc...) asparagine). A helical membrane pass occupies residues 157–177 (AAAAISLAFFAFLAISLSALI). The Cytoplasmic segment spans residues 178–188 (SGYNLSLEAIV).

This sequence belongs to the Casparian strip membrane proteins (CASP) family. Homodimer and heterodimers.

The protein localises to the cell membrane. The chain is CASP-like protein 4B3 from Hordeum vulgare subsp. vulgare (Domesticated barley).